The following is a 312-amino-acid chain: Serine/threonine-protein phosphatase CPPED1 (312 aa).

Position 2 is a phosphoserine (Ser-2). A catalytic region spans residues 47-250; sequence KAWSTGNCDN…AVFSGHYHRN (204 aa). A divalent metal cation is bound by residues Asp-90, Asn-127, and His-246. Ser-293 is modified (phosphoserine).

Belongs to the metallophosphoesterase superfamily. CPPED1 family. A divalent metal cation is required as a cofactor.

It localises to the cytoplasm. The catalysed reaction is O-phospho-L-seryl-[protein] + H2O = L-seryl-[protein] + phosphate. The enzyme catalyses O-phospho-L-threonyl-[protein] + H2O = L-threonyl-[protein] + phosphate. Protein phosphatase that dephosphorylates AKT family kinase specifically at 'Ser-473', blocking cell cycle progression and promoting cell apoptosis. May play an inhibitory role in glucose uptake by adipocytes. The protein is Serine/threonine-protein phosphatase CPPED1 (Cpped1) of Rattus norvegicus (Rat).